A 545-amino-acid chain; its full sequence is Chromosomal replication initiator protein DnaA (545 aa).

The interval Met-1–Pro-72 is domain I, interacts with DnaA modulators. The segment at Pro-72–Ser-208 is domain II. The segment covering Ala-90–Gly-105 has biased composition (low complexity). 2 disordered regions span residues Ala-90–Gly-112 and Ala-181–Met-204. Residues Pro-189 to Thr-201 show a composition bias toward polar residues. The interval Lys-209–Ser-425 is domain III, AAA+ region. Gly-253, Gly-255, Lys-256, and Thr-257 together coordinate ATP. The interval Lys-426 to Gly-545 is domain IV, binds dsDNA.

It belongs to the DnaA family. As to quaternary structure, oligomerizes as a right-handed, spiral filament on DNA at oriC.

The protein localises to the cytoplasm. Functionally, plays an essential role in the initiation and regulation of chromosomal replication. ATP-DnaA binds to the origin of replication (oriC) to initiate formation of the DNA replication initiation complex once per cell cycle. Binds the DnaA box (a 9 base pair repeat at the origin) and separates the double-stranded (ds)DNA. Forms a right-handed helical filament on oriC DNA; dsDNA binds to the exterior of the filament while single-stranded (ss)DNA is stabiized in the filament's interior. The ATP-DnaA-oriC complex binds and stabilizes one strand of the AT-rich DNA unwinding element (DUE), permitting loading of DNA polymerase. After initiation quickly degrades to an ADP-DnaA complex that is not apt for DNA replication. Binds acidic phospholipids. In Paraburkholderia phytofirmans (strain DSM 17436 / LMG 22146 / PsJN) (Burkholderia phytofirmans), this protein is Chromosomal replication initiator protein DnaA.